The following is a 441-amino-acid chain: Protein disulfide isomerase-like 2-3 (441 aa).

Residues 1 to 18 form the signal peptide; sequence MRPAVAAALLLVAAAVAA. 2 consecutive Thioredoxin domains span residues 19-139 and 159-276; these read SPVS…ALLR and SEKT…ANAA. Residues Cys59 and Cys62 each act as nucleophile in the active site. Cys59 and Cys62 are joined by a disulfide. A disordered region spans residues 143–166; the sequence is NGKTSAGSGGKKSGGSSEKTEPSA. Residues Cys195 and Cys198 each act as nucleophile in the active site. Cys195 and Cys198 are disulfide-bonded.

This sequence belongs to the protein disulfide isomerase family.

The protein resides in the endoplasmic reticulum lumen. The enzyme catalyses Catalyzes the rearrangement of -S-S- bonds in proteins.. Its function is as follows. Acts as a protein-folding catalyst that interacts with nascent polypeptides to catalyze the formation, isomerization, and reduction or oxidation of disulfide bonds. May play a role in storage protein biogenesis. In Oryza sativa subsp. japonica (Rice), this protein is Protein disulfide isomerase-like 2-3 (PDIL2-3).